The sequence spans 696 residues: SEC14-like protein 5 (696 aa).

Residues 2 to 175 form the PRELI/MSF1 domain; it reads VQRYQSPVRV…YLNELISQGT (174 aa). A disordered region spans residues 178–214; sequence IPRWTPAPVREEDARNQAGPRDPSSLEAHGPRSTLGP. Residues 306 to 482 form the CRAL-TRIO domain; sequence PPALLEEFYA…FLGGESVCNV (177 aa). Residues 509-653 form the GOLD domain; sequence SETYHSASVL…KCKLLYYCEV (145 aa).

In Homo sapiens (Human), this protein is SEC14-like protein 5 (SEC14L5).